The sequence spans 278 residues: HTH-type transcriptional regulator HdfR (278 aa).

The 58-residue stretch at 1–58 (MDTELLKTFLEVSRTRHFGRAAEALYLTQSAVSFRIRQLENQLGVNLFTRHRNNIRLT) folds into the HTH lysR-type domain. Residues 18 to 37 (FGRAAEALYLTQSAVSFRIR) constitute a DNA-binding region (H-T-H motif).

Belongs to the LysR transcriptional regulatory family.

Functionally, negatively regulates the transcription of the flagellar master operon flhDC by binding to the upstream region of the operon. This chain is HTH-type transcriptional regulator HdfR, found in Salmonella agona (strain SL483).